Consider the following 258-residue polypeptide: Indole-3-glycerol phosphate synthase (258 aa).

This sequence belongs to the TrpC family.

The enzyme catalyses 1-(2-carboxyphenylamino)-1-deoxy-D-ribulose 5-phosphate + H(+) = (1S,2R)-1-C-(indol-3-yl)glycerol 3-phosphate + CO2 + H2O. It participates in amino-acid biosynthesis; L-tryptophan biosynthesis; L-tryptophan from chorismate: step 4/5. This chain is Indole-3-glycerol phosphate synthase, found in Legionella pneumophila (strain Paris).